A 728-amino-acid chain; its full sequence is 1,4-alpha-glucan branching enzyme GlgB (728 aa).

The active-site Nucleophile is Asp-405. The active-site Proton donor is Glu-458.

Belongs to the glycosyl hydrolase 13 family. GlgB subfamily. As to quaternary structure, monomer.

It carries out the reaction Transfers a segment of a (1-&gt;4)-alpha-D-glucan chain to a primary hydroxy group in a similar glucan chain.. It participates in glycan biosynthesis; glycogen biosynthesis. Catalyzes the formation of the alpha-1,6-glucosidic linkages in glycogen by scission of a 1,4-alpha-linked oligosaccharide from growing alpha-1,4-glucan chains and the subsequent attachment of the oligosaccharide to the alpha-1,6 position. This chain is 1,4-alpha-glucan branching enzyme GlgB, found in Escherichia coli O1:K1 / APEC.